Consider the following 99-residue polypeptide: Small ribosomal subunit protein bS20 (99 aa).

The protein belongs to the bacterial ribosomal protein bS20 family.

Functionally, binds directly to 16S ribosomal RNA. The protein is Small ribosomal subunit protein bS20 of Thermomicrobium roseum (strain ATCC 27502 / DSM 5159 / P-2).